The following is a 500-amino-acid chain: Glycerol kinase (500 aa).

Position 12 (T12) interacts with ADP. ATP-binding residues include T12, T13, and S14. T12 lines the sn-glycerol 3-phosphate pocket. R16 lines the ADP pocket. Sn-glycerol 3-phosphate contacts are provided by R82, E83, Y135, and D245. Positions 82, 83, 135, 245, and 246 each coordinate glycerol. T267 and G310 together coordinate ADP. Residues T267, G310, Q314, and G411 each coordinate ATP. Positions 411 and 415 each coordinate ADP.

Belongs to the FGGY kinase family. As to quaternary structure, homotetramer and homodimer (in equilibrium).

It carries out the reaction glycerol + ATP = sn-glycerol 3-phosphate + ADP + H(+). It participates in polyol metabolism; glycerol degradation via glycerol kinase pathway; sn-glycerol 3-phosphate from glycerol: step 1/1. Its activity is regulated as follows. Activated by phosphorylation and inhibited by fructose 1,6-bisphosphate (FBP). In terms of biological role, key enzyme in the regulation of glycerol uptake and metabolism. Catalyzes the phosphorylation of glycerol to yield sn-glycerol 3-phosphate. The chain is Glycerol kinase from Clostridium perfringens (strain ATCC 13124 / DSM 756 / JCM 1290 / NCIMB 6125 / NCTC 8237 / Type A).